The following is a 644-amino-acid chain: Macrolide export ATP-binding/permease protein MacB (644 aa).

Residues L6–G244 enclose the ABC transporter domain. Position 42–49 (G42–S49) interacts with ATP. 5 helical membrane-spanning segments follow: residues A271–G291, E415–A435, L517–M537, L574–F594, and V609–A629.

This sequence belongs to the ABC transporter superfamily. Macrolide exporter (TC 3.A.1.122) family. As to quaternary structure, homodimer.

It is found in the cell inner membrane. Its function is as follows. Non-canonical ABC transporter that contains transmembrane domains (TMD), which form a pore in the inner membrane, and an ATP-binding domain (NBD), which is responsible for energy generation. Confers resistance against macrolides. This is Macrolide export ATP-binding/permease protein MacB from Chromobacterium violaceum (strain ATCC 12472 / DSM 30191 / JCM 1249 / CCUG 213 / NBRC 12614 / NCIMB 9131 / NCTC 9757 / MK).